A 342-amino-acid polypeptide reads, in one-letter code: MLPFEFEFNTTSSPECDVCLDPQKLFVKLFKRTIVLLSGPTGSGKTDVSLALAPMIDGEIVSVDSMQVYQGMDIGTAKVSLKARQEIPHHLIDIRHVQEPFNVVDFYYEAIQACQNILSRNKVPILVGGSGFYFHAFLSGPPKGPAADPQIREQLEAIAEEHGVSALYEDLLLKDPEYAQTITKNDKNKIIRGLEIIQLTGKKVSDHEWDIVPKASREYCCRAWFLSPETEFLKNNIQMRCEAMLQEGLLEEVRGLLNQGIRENPSAFKAIGYREWIEFLDNGEKLEEYEETKRKFVSNSWHYTKKQKTWFKRYSIFRELPTLGLSSDAIAQKIAKDYLLYS.

ATP is bound at residue 39–46 (GPTGSGKT). Position 41 to 46 (41 to 46 (TGSGKT)) interacts with substrate. Positions 64–67 (DSMQ) are interaction with substrate tRNA.

This sequence belongs to the IPP transferase family. In terms of assembly, monomer. Mg(2+) is required as a cofactor.

The catalysed reaction is adenosine(37) in tRNA + dimethylallyl diphosphate = N(6)-dimethylallyladenosine(37) in tRNA + diphosphate. Catalyzes the transfer of a dimethylallyl group onto the adenine at position 37 in tRNAs that read codons beginning with uridine, leading to the formation of N6-(dimethylallyl)adenosine (i(6)A). The chain is tRNA dimethylallyltransferase from Chlamydia pneumoniae (Chlamydophila pneumoniae).